The primary structure comprises 396 residues: Flavohemoprotein (396 aa).

Residues 1–136 form the Globin domain; that stretch reads MLDAQTIATV…LANVFIHREA (136 aa). Residue His85 coordinates heme b. Catalysis depends on charge relay system residues Tyr95 and Glu135. The interval 147–396 is reductase; that stretch reads GGWEGTRPFR…YECFGPHKVL (250 aa). The FAD-binding FR-type domain occupies 150 to 255; that stretch reads EGTRPFRIVA…AAPAGDFFMN (106 aa). Residues Tyr188 and 204-207 each bind FAD; that span reads RQYS. Residue 268–273 participates in NADP(+) binding; that stretch reads GVGQTP. 389 to 392 contributes to the FAD binding site; the sequence is CFGP.

It belongs to the globin family. Two-domain flavohemoproteins subfamily. In the C-terminal section; belongs to the flavoprotein pyridine nucleotide cytochrome reductase family. Heme b serves as cofactor. The cofactor is FAD.

It catalyses the reaction 2 nitric oxide + NADPH + 2 O2 = 2 nitrate + NADP(+) + H(+). The catalysed reaction is 2 nitric oxide + NADH + 2 O2 = 2 nitrate + NAD(+) + H(+). Is involved in NO detoxification in an aerobic process, termed nitric oxide dioxygenase (NOD) reaction that utilizes O(2) and NAD(P)H to convert NO to nitrate, which protects the bacterium from various noxious nitrogen compounds. Therefore, plays a central role in the inducible response to nitrosative stress. This Salmonella typhi protein is Flavohemoprotein.